A 366-amino-acid polypeptide reads, in one-letter code: UDP-N-acetylglucosamine--N-acetylmuramyl-(pentapeptide) pyrophosphoryl-undecaprenol N-acetylglucosamine transferase (366 aa).

Residues 10 to 12 (TGG), asparagine 124, serine 195, and glutamine 295 contribute to the UDP-N-acetyl-alpha-D-glucosamine site.

It belongs to the glycosyltransferase 28 family. MurG subfamily.

The protein localises to the cell membrane. It catalyses the reaction di-trans,octa-cis-undecaprenyl diphospho-N-acetyl-alpha-D-muramoyl-L-alanyl-D-glutamyl-meso-2,6-diaminopimeloyl-D-alanyl-D-alanine + UDP-N-acetyl-alpha-D-glucosamine = di-trans,octa-cis-undecaprenyl diphospho-[N-acetyl-alpha-D-glucosaminyl-(1-&gt;4)]-N-acetyl-alpha-D-muramoyl-L-alanyl-D-glutamyl-meso-2,6-diaminopimeloyl-D-alanyl-D-alanine + UDP + H(+). The protein operates within cell wall biogenesis; peptidoglycan biosynthesis. In terms of biological role, cell wall formation. Catalyzes the transfer of a GlcNAc subunit on undecaprenyl-pyrophosphoryl-MurNAc-pentapeptide (lipid intermediate I) to form undecaprenyl-pyrophosphoryl-MurNAc-(pentapeptide)GlcNAc (lipid intermediate II). This chain is UDP-N-acetylglucosamine--N-acetylmuramyl-(pentapeptide) pyrophosphoryl-undecaprenol N-acetylglucosamine transferase, found in Bacillus licheniformis (strain ATCC 14580 / DSM 13 / JCM 2505 / CCUG 7422 / NBRC 12200 / NCIMB 9375 / NCTC 10341 / NRRL NRS-1264 / Gibson 46).